Consider the following 292-residue polypeptide: Coatomer subunit epsilon-1 (292 aa).

It belongs to the COPE family. In terms of assembly, oligomeric complex that consists of at least the alpha, beta, beta', gamma, delta, epsilon and zeta subunits.

It is found in the cytoplasm. The protein resides in the golgi apparatus membrane. Its subcellular location is the cytoplasmic vesicle. The protein localises to the COPI-coated vesicle membrane. Its function is as follows. The coatomer is a cytosolic protein complex that binds to dilysine motifs and reversibly associates with Golgi non-clathrin-coated vesicles, which further mediate biosynthetic protein transport from the ER, via the Golgi up to the trans Golgi network. The coatomer complex is required for budding from Golgi membranes, and is essential for the retrograde Golgi-to-ER transport of dilysine-tagged proteins. This chain is Coatomer subunit epsilon-1, found in Arabidopsis thaliana (Mouse-ear cress).